We begin with the raw amino-acid sequence, 345 residues long: Isocitrate/homoisocitrate dehydrogenase (345 aa).

69-71 is an NADH binding site; sequence TTT. The (2R,3S)-homoisocitrate site is built by Arg86, Arg96, Arg111, Tyr118, Lys163, and Asn165. Asn165 is a binding site for NADH. Mg(2+)-binding residues include Asp194, Asp218, and Asp222. Residues 251 to 255 and Asn263 contribute to the NADH site; that span reads GSAPD.

This sequence belongs to the isocitrate and isopropylmalate dehydrogenases family. The cofactor is Mn(2+). Mg(2+) is required as a cofactor.

The enzyme catalyses D-threo-isocitrate + NAD(+) = 2-oxoglutarate + CO2 + NADH. It carries out the reaction (2R,3S)-homoisocitrate + NAD(+) = 2-oxoadipate + CO2 + NADH. It functions in the pathway amino-acid biosynthesis; L-lysine biosynthesis via AAA pathway; L-alpha-aminoadipate from 2-oxoglutarate: step 4/5. Catalyzes the NAD(+)-dependent oxidative decarboxylation of homoisocitrate to 2-oxoadipate (alpha-ketoadipate), and of isocitrate to 2-oxoglutarate, at near equal efficiency. May thus play a dual role in glutamate and lysine biosynthesis in vivo. Preferentially uses NAD over NADP. This Pyrococcus horikoshii (strain ATCC 700860 / DSM 12428 / JCM 9974 / NBRC 100139 / OT-3) protein is Isocitrate/homoisocitrate dehydrogenase.